The following is a 250-amino-acid chain: MGQKVNPVGLRLGINRTWDSRWFADGNQYGKLLHQDLAVRAALKKRLYQAGVSRIIIERPHKKCRVTIYAARPGVIIGKKGADIDKLRKDLSIMTEGEVHLNIVEIRKPETDAQLVAESIAQQLERRIAFRRAMKRSIQSAVRLGAKGIRINVSGRLGGAEIARMEWYREGRVPLHTLRADIDFGFAEAKTTYGIIGVKTWIFKGEVLEHDPMALDKRLATESGPAGEGGGRERGDRPDRGDRRDRRDRA.

Residues 39 to 107 (VRAALKKRLY…EVHLNIVEIR (69 aa)) form the KH type-2 domain. Residues 215–250 (LDKRLATESGPAGEGGGRERGDRPDRGDRRDRRDRA) are disordered. Basic and acidic residues predominate over residues 230–250 (GGRERGDRPDRGDRRDRRDRA).

It belongs to the universal ribosomal protein uS3 family. As to quaternary structure, part of the 30S ribosomal subunit. Forms a tight complex with proteins S10 and S14.

Functionally, binds the lower part of the 30S subunit head. Binds mRNA in the 70S ribosome, positioning it for translation. This chain is Small ribosomal subunit protein uS3, found in Caulobacter vibrioides (strain ATCC 19089 / CIP 103742 / CB 15) (Caulobacter crescentus).